Here is a 213-residue protein sequence, read N- to C-terminus: LexA repressor (213 aa).

Positions 31-51 (RAEISRELGFRSPNAAEEYLK) form a DNA-binding region, H-T-H motif. Active-site for autocatalytic cleavage activity residues include S129 and K166.

Belongs to the peptidase S24 family. As to quaternary structure, homodimer.

It catalyses the reaction Hydrolysis of Ala-|-Gly bond in repressor LexA.. Functionally, represses a number of genes involved in the response to DNA damage (SOS response), including recA and lexA. In the presence of single-stranded DNA, RecA interacts with LexA causing an autocatalytic cleavage which disrupts the DNA-binding part of LexA, leading to derepression of the SOS regulon and eventually DNA repair. The chain is LexA repressor from Mannheimia succiniciproducens (strain KCTC 0769BP / MBEL55E).